A 120-amino-acid chain; its full sequence is Large ribosomal subunit protein uL18 (120 aa).

It belongs to the universal ribosomal protein uL18 family. In terms of assembly, part of the 50S ribosomal subunit; part of the 5S rRNA/L5/L18/L25 subcomplex. Contacts the 5S and 23S rRNAs.

Its function is as follows. This is one of the proteins that bind and probably mediate the attachment of the 5S RNA into the large ribosomal subunit, where it forms part of the central protuberance. This is Large ribosomal subunit protein uL18 from Methylorubrum extorquens (strain CM4 / NCIMB 13688) (Methylobacterium extorquens).